The primary structure comprises 89 residues: Small ribosomal subunit protein uS17 (89 aa).

The protein belongs to the universal ribosomal protein uS17 family. As to quaternary structure, part of the 30S ribosomal subunit.

Its function is as follows. One of the primary rRNA binding proteins, it binds specifically to the 5'-end of 16S ribosomal RNA. The protein is Small ribosomal subunit protein uS17 of Aromatoleum aromaticum (strain DSM 19018 / LMG 30748 / EbN1) (Azoarcus sp. (strain EbN1)).